The primary structure comprises 143 residues: Large ribosomal subunit protein uL11 (143 aa).

Belongs to the universal ribosomal protein uL11 family. As to quaternary structure, part of the ribosomal stalk of the 50S ribosomal subunit. Interacts with L10 and the large rRNA to form the base of the stalk. L10 forms an elongated spine to which L12 dimers bind in a sequential fashion forming a multimeric L10(L12)X complex. One or more lysine residues are methylated.

Its function is as follows. Forms part of the ribosomal stalk which helps the ribosome interact with GTP-bound translation factors. The polypeptide is Large ribosomal subunit protein uL11 (Borreliella burgdorferi (strain ATCC 35210 / DSM 4680 / CIP 102532 / B31) (Borrelia burgdorferi)).